The following is a 239-amino-acid chain: 1-(5-phosphoribosyl)-5-[(5-phosphoribosylamino)methylideneamino] imidazole-4-carboxamide isomerase (239 aa).

Residue D8 is the Proton acceptor of the active site. D130 acts as the Proton donor in catalysis.

The protein belongs to the HisA/HisF family.

It localises to the cytoplasm. It catalyses the reaction 1-(5-phospho-beta-D-ribosyl)-5-[(5-phospho-beta-D-ribosylamino)methylideneamino]imidazole-4-carboxamide = 5-[(5-phospho-1-deoxy-D-ribulos-1-ylimino)methylamino]-1-(5-phospho-beta-D-ribosyl)imidazole-4-carboxamide. Its pathway is amino-acid biosynthesis; L-histidine biosynthesis; L-histidine from 5-phospho-alpha-D-ribose 1-diphosphate: step 4/9. The polypeptide is 1-(5-phosphoribosyl)-5-[(5-phosphoribosylamino)methylideneamino] imidazole-4-carboxamide isomerase (Lachnoclostridium phytofermentans (strain ATCC 700394 / DSM 18823 / ISDg) (Clostridium phytofermentans)).